The sequence spans 262 residues: Adenosylcobinamide-GDP ribazoletransferase (262 aa).

A run of 6 helical transmembrane segments spans residues 43–63 (YFGL…WLTQ), 66–86 (LPAG…TGGF), 120–140 (GALA…ELAL), 146–166 (AGSA…SIIF), 191–211 (LLIL…LAAL), and 242–262 (AAQQ…GNIL).

The protein belongs to the CobS family. It depends on Mg(2+) as a cofactor.

The protein localises to the cell inner membrane. It carries out the reaction alpha-ribazole + adenosylcob(III)inamide-GDP = adenosylcob(III)alamin + GMP + H(+). It catalyses the reaction alpha-ribazole 5'-phosphate + adenosylcob(III)inamide-GDP = adenosylcob(III)alamin 5'-phosphate + GMP + H(+). It participates in cofactor biosynthesis; adenosylcobalamin biosynthesis; adenosylcobalamin from cob(II)yrinate a,c-diamide: step 7/7. Its function is as follows. Joins adenosylcobinamide-GDP and alpha-ribazole to generate adenosylcobalamin (Ado-cobalamin). Also synthesizes adenosylcobalamin 5'-phosphate from adenosylcobinamide-GDP and alpha-ribazole 5'-phosphate. The protein is Adenosylcobinamide-GDP ribazoletransferase of Shewanella baltica (strain OS155 / ATCC BAA-1091).